A 330-amino-acid chain; its full sequence is tRNA U34 carboxymethyltransferase (330 aa).

Residues lysine 91, tryptophan 105, lysine 110, glycine 130, 152 to 154 (DPS), 181 to 182 (IE), methionine 196, tyrosine 200, and arginine 315 each bind carboxy-S-adenosyl-L-methionine.

Belongs to the class I-like SAM-binding methyltransferase superfamily. CmoB family. Homotetramer.

The enzyme catalyses carboxy-S-adenosyl-L-methionine + 5-hydroxyuridine(34) in tRNA = 5-carboxymethoxyuridine(34) in tRNA + S-adenosyl-L-homocysteine + H(+). Catalyzes carboxymethyl transfer from carboxy-S-adenosyl-L-methionine (Cx-SAM) to 5-hydroxyuridine (ho5U) to form 5-carboxymethoxyuridine (cmo5U) at position 34 in tRNAs. In Shewanella loihica (strain ATCC BAA-1088 / PV-4), this protein is tRNA U34 carboxymethyltransferase.